A 183-amino-acid polypeptide reads, in one-letter code: Translation initiation factor IF-3 (183 aa).

The protein belongs to the IF-3 family. Monomer.

The protein localises to the cytoplasm. IF-3 binds to the 30S ribosomal subunit and shifts the equilibrium between 70S ribosomes and their 50S and 30S subunits in favor of the free subunits, thus enhancing the availability of 30S subunits on which protein synthesis initiation begins. The chain is Translation initiation factor IF-3 from Pseudomonas aeruginosa (strain ATCC 15692 / DSM 22644 / CIP 104116 / JCM 14847 / LMG 12228 / 1C / PRS 101 / PAO1).